Consider the following 501-residue polypeptide: Putative matrix metalloproteinase (501 aa).

The signal sequence occupies residues 1-26; the sequence is MMPQYERKQIIIHISCVIICVVVTLT. Residues N48, N58, N61, N94, N116, and N163 are each glycosylated (N-linked (GlcNAc...) asparagine; by host). H179 provides a ligand contact to Zn(2+). E180 is an active-site residue. 2 residues coordinate Zn(2+): H183 and H189. N192, N267, N280, and N291 each carry an N-linked (GlcNAc...) asparagine; by host glycan. The Hemopexin repeat unit spans residues 311–356; the sequence is TGHIDTISVIRGELYIFVDEYHWRFRSNGLLYSGYPLKTTHSWSVP. Residues N379 and N493 are each glycosylated (N-linked (GlcNAc...) asparagine; by host).

Belongs to the peptidase M10A family. Zn(2+) serves as cofactor.

The sequence is that of Putative matrix metalloproteinase from Trichoplusia ni ascovirus 2c (TnAV-2c).